We begin with the raw amino-acid sequence, 401 residues long: Ribosomal RNA large subunit methyltransferase G (401 aa).

This sequence belongs to the methyltransferase superfamily. RlmG family.

It is found in the cytoplasm. The catalysed reaction is guanosine(1835) in 23S rRNA + S-adenosyl-L-methionine = N(2)-methylguanosine(1835) in 23S rRNA + S-adenosyl-L-homocysteine + H(+). Functionally, specifically methylates the guanine in position 1835 (m2G1835) of 23S rRNA. This chain is Ribosomal RNA large subunit methyltransferase G, found in Shewanella loihica (strain ATCC BAA-1088 / PV-4).